A 191-amino-acid polypeptide reads, in one-letter code: Insulin-like peptide INSL6 (191 aa).

The signal sequence occupies residues 1 to 22; sequence MKQLCCSCLLWLGLLLTPFSRE. Disulfide bonds link C33–C172, C45–C185, and C171–C176. A propeptide spans 53–161 (connecting peptide); that stretch reads FEMEEQSPMT…RSLFWGNHSQ (109 aa).

The protein belongs to the insulin family.

It localises to the secreted. May have a role in sperm development and fertilization. The sequence is that of Insulin-like peptide INSL6 (Insl6) from Mus musculus (Mouse).